A 293-amino-acid polypeptide reads, in one-letter code: uncharacterized protein (293 aa).

Catalysis depends on charge relay system residues Thr-43 and Tyr-105. The active-site Proton donor is Tyr-131. Residue Lys-159 is the Schiff-base intermediate with substrate of the active site.

It belongs to the DapA family. As to quaternary structure, homotetramer.

The protein resides in the cytoplasm. This is an uncharacterized protein from Thermococcus onnurineus (strain NA1).